The sequence spans 138 residues: Cysteine desulfuration protein SufE (138 aa).

C51 serves as the catalytic Cysteine persulfide intermediate.

The protein belongs to the SufE family. Homodimer. Interacts with SufS.

It is found in the cytoplasm. Its pathway is cofactor biosynthesis; iron-sulfur cluster biosynthesis. In terms of biological role, participates in cysteine desulfuration mediated by SufS. Cysteine desulfuration mobilizes sulfur from L-cysteine to yield L-alanine and constitutes an essential step in sulfur metabolism for biosynthesis of a variety of sulfur-containing biomolecules. Functions as a sulfur acceptor for SufS, by mediating the direct transfer of the sulfur atom from the S-sulfanylcysteine of SufS, an intermediate product of cysteine desulfuration process. In Escherichia coli O81 (strain ED1a), this protein is Cysteine desulfuration protein SufE.